The following is a 297-amino-acid chain: 4-hydroxy-tetrahydrodipicolinate synthase (297 aa).

Threonine 46 contacts pyruvate. Tyrosine 134 acts as the Proton donor/acceptor in catalysis. The Schiff-base intermediate with substrate role is filled by lysine 162. A pyruvate-binding site is contributed by isoleucine 204.

This sequence belongs to the DapA family. In terms of assembly, homotetramer; dimer of dimers.

It is found in the cytoplasm. It carries out the reaction L-aspartate 4-semialdehyde + pyruvate = (2S,4S)-4-hydroxy-2,3,4,5-tetrahydrodipicolinate + H2O + H(+). It participates in amino-acid biosynthesis; L-lysine biosynthesis via DAP pathway; (S)-tetrahydrodipicolinate from L-aspartate: step 3/4. In terms of biological role, catalyzes the condensation of (S)-aspartate-beta-semialdehyde [(S)-ASA] and pyruvate to 4-hydroxy-tetrahydrodipicolinate (HTPA). The chain is 4-hydroxy-tetrahydrodipicolinate synthase from Stenotrophomonas maltophilia (strain R551-3).